The sequence spans 156 residues: MKLQLIAVGTRMPDWVTRGFEEYQRRFPRDMALELIEIPAGKRGKNADIVRILQKEGEQMLAAIPKGNHIVTLDLPGKNWTTPELATAMNKWQLDGRDVSLLVGGPEGLAPACKEAAHQSWCLSALTLPHPLVRIVVAESLYRAWSVNNNHPYHRE.

Residues L73, G104, and 123-128 each bind S-adenosyl-L-methionine; that span reads LSALTL.

The protein belongs to the RNA methyltransferase RlmH family. In terms of assembly, homodimer.

It localises to the cytoplasm. The enzyme catalyses pseudouridine(1915) in 23S rRNA + S-adenosyl-L-methionine = N(3)-methylpseudouridine(1915) in 23S rRNA + S-adenosyl-L-homocysteine + H(+). Specifically methylates the pseudouridine at position 1915 (m3Psi1915) in 23S rRNA. In Shewanella sp. (strain MR-7), this protein is Ribosomal RNA large subunit methyltransferase H.